The primary structure comprises 78 residues: Acyl carrier protein (78 aa).

Residues 2-77 enclose the Carrier domain; sequence SDTVERVKKI…DAVKFIDKAS (76 aa). Ser-37 carries the O-(pantetheine 4'-phosphoryl)serine modification.

Belongs to the acyl carrier protein (ACP) family. Post-translationally, 4'-phosphopantetheine is transferred from CoA to a specific serine of apo-ACP by AcpS. This modification is essential for activity because fatty acids are bound in thioester linkage to the sulfhydryl of the prosthetic group.

The protein resides in the cytoplasm. Its pathway is lipid metabolism; fatty acid biosynthesis. In terms of biological role, carrier of the growing fatty acid chain in fatty acid biosynthesis. This Bartonella quintana (strain Toulouse) (Rochalimaea quintana) protein is Acyl carrier protein.